Consider the following 145-residue polypeptide: Probable WRKY transcription factor 75 (145 aa).

The span at 20–38 (SKPELHQGEEESSKVRSEG) shows a compositional bias: basic and acidic residues. The segment at 20 to 55 (SKPELHQGEEESSKVRSEGCSKSVESSKKKGKKQRY) is disordered. The segment at residues 61 to 126 (SQVDILDDGY…YEGVHSHPIE (66 aa)) is a DNA-binding region (WRKY).

The protein belongs to the WRKY group II-c family.

The protein localises to the nucleus. Its function is as follows. Transcription factor. Interacts specifically with the W box (5'-(T)TGAC[CT]-3'), a frequently occurring elicitor-responsive cis-acting element. The protein is Probable WRKY transcription factor 75 (WRKY75) of Arabidopsis thaliana (Mouse-ear cress).